The following is a 374-amino-acid chain: Inner membrane transport permease YhhJ (374 aa).

Topologically, residues 1–22 (MRHLRNIFNLGIKELRSLLGDK) are cytoplasmic. A helical membrane pass occupies residues 23–43 (AMLTLIVFSFTVSVYSSATVT). Residues 44-172 (PGSLNLAPIA…TRMRFNPNLD (129 aa)) lie on the Periplasmic side of the membrane. An ABC transmembrane type-2 domain is found at 133 to 369 (NGYIQNIING…TIALLRFRKT (237 aa)). Residues 173–193 (PAWFGGVMAIINNITMLAIVL) traverse the membrane as a helical segment. Topologically, residues 194-229 (TGSALIREREHGTVEHLLVMPITPFEIMMAKIWSMG) are cytoplasmic. A helical membrane pass occupies residues 230–250 (LVVLVVSGLSLVLMVKGVLGV). The Periplasmic segment spans residues 251–255 (PIEGS). The helical transmembrane segment at 256-276 (IPLFMLGVALSLFATTSIGIF) threads the bilayer. The Cytoplasmic segment spans residues 277-283 (MGTIARS). Residues 284 to 304 (MPQLGLLVILVLLPLQMLSGG) traverse the membrane as a helical segment. Topologically, residues 305-342 (STPRESMPQMVQDIMLTMPTTHFVSLAQAILYRGAGFE) are periplasmic. Residues 343-363 (IVWPQFLTLMAIGGAFFTIAL) traverse the membrane as a helical segment. At 364 to 374 (LRFRKTIGTMA) the chain is on the cytoplasmic side.

Belongs to the ABC-2 integral membrane protein family.

It is found in the cell inner membrane. This Escherichia coli (strain K12) protein is Inner membrane transport permease YhhJ (yhhJ).